The chain runs to 339 residues: Holliday junction branch migration complex subunit RuvB (339 aa).

Residues 1 to 187 (MQGFEDENRI…FGVICKLDYY (187 aa)) are large ATPase domain (RuvB-L). ATP is bound by residues L26, R27, G68, K71, T72, T73, 134–136 (EDF), R177, Y187, and R224. Position 72 (T72) interacts with Mg(2+). Positions 188 to 258 (TVDELSKIVL…VAKDALELLG (71 aa)) are small ATPAse domain (RuvB-S). Residues 261-339 (SLGLDFVDEK…HLKIPYPNEK (79 aa)) are head domain (RuvB-H). Residues R297, R316, and R321 each contribute to the DNA site.

This sequence belongs to the RuvB family. In terms of assembly, homohexamer. Forms an RuvA(8)-RuvB(12)-Holliday junction (HJ) complex. HJ DNA is sandwiched between 2 RuvA tetramers; dsDNA enters through RuvA and exits via RuvB. An RuvB hexamer assembles on each DNA strand where it exits the tetramer. Each RuvB hexamer is contacted by two RuvA subunits (via domain III) on 2 adjacent RuvB subunits; this complex drives branch migration. In the full resolvosome a probable DNA-RuvA(4)-RuvB(12)-RuvC(2) complex forms which resolves the HJ.

The protein localises to the cytoplasm. The enzyme catalyses ATP + H2O = ADP + phosphate + H(+). The RuvA-RuvB-RuvC complex processes Holliday junction (HJ) DNA during genetic recombination and DNA repair, while the RuvA-RuvB complex plays an important role in the rescue of blocked DNA replication forks via replication fork reversal (RFR). RuvA specifically binds to HJ cruciform DNA, conferring on it an open structure. The RuvB hexamer acts as an ATP-dependent pump, pulling dsDNA into and through the RuvAB complex. RuvB forms 2 homohexamers on either side of HJ DNA bound by 1 or 2 RuvA tetramers; 4 subunits per hexamer contact DNA at a time. Coordinated motions by a converter formed by DNA-disengaged RuvB subunits stimulates ATP hydrolysis and nucleotide exchange. Immobilization of the converter enables RuvB to convert the ATP-contained energy into a lever motion, pulling 2 nucleotides of DNA out of the RuvA tetramer per ATP hydrolyzed, thus driving DNA branch migration. The RuvB motors rotate together with the DNA substrate, which together with the progressing nucleotide cycle form the mechanistic basis for DNA recombination by continuous HJ branch migration. Branch migration allows RuvC to scan DNA until it finds its consensus sequence, where it cleaves and resolves cruciform DNA. The protein is Holliday junction branch migration complex subunit RuvB of Clostridioides difficile (strain 630) (Peptoclostridium difficile).